The following is a 113-amino-acid chain: Ribonuclease P protein component (113 aa).

This sequence belongs to the RnpA family. As to quaternary structure, consists of a catalytic RNA component (M1 or rnpB) and a protein subunit.

The enzyme catalyses Endonucleolytic cleavage of RNA, removing 5'-extranucleotides from tRNA precursor.. In terms of biological role, RNaseP catalyzes the removal of the 5'-leader sequence from pre-tRNA to produce the mature 5'-terminus. It can also cleave other RNA substrates such as 4.5S RNA. The protein component plays an auxiliary but essential role in vivo by binding to the 5'-leader sequence and broadening the substrate specificity of the ribozyme. This is Ribonuclease P protein component from Vesicomyosocius okutanii subsp. Calyptogena okutanii (strain HA).